A 181-amino-acid chain; its full sequence is Ribulose bisphosphate carboxylase small subunit, chloroplastic (181 aa).

The transit peptide at Met-1–Gln-56 directs the protein to the chloroplast.

The protein belongs to the RuBisCO small chain family. In terms of assembly, heterohexadecamer of 8 large and 8 small subunits.

It localises to the plastid. The protein localises to the chloroplast. RuBisCO catalyzes two reactions: the carboxylation of D-ribulose 1,5-bisphosphate, the primary event in carbon dioxide fixation, as well as the oxidative fragmentation of the pentose substrate. Both reactions occur simultaneously and in competition at the same active site. Although the small subunit is not catalytic it is essential for maximal activity. This chain is Ribulose bisphosphate carboxylase small subunit, chloroplastic, found in Lactuca sativa (Garden lettuce).